Reading from the N-terminus, the 496-residue chain is Beta-amylase (496 aa).

Residues Asp54, His94, and Asp102 each contribute to the substrate site. Catalysis depends on Glu187, which acts as the Proton donor. Substrate-binding residues include Lys296, His301, and Thr343. The active-site Proton acceptor is Glu381. Residues 382–383 and Arg421 contribute to the substrate site; that span reads NA. Positions 455–496 are disordered; sequence YNHGIPPLKRSGPKIPDDVLNEATKPIPPFPWDSETDMKVDG.

Belongs to the glycosyl hydrolase 14 family.

The catalysed reaction is Hydrolysis of (1-&gt;4)-alpha-D-glucosidic linkages in polysaccharides so as to remove successive maltose units from the non-reducing ends of the chains.. The sequence is that of Beta-amylase (BMY1) from Medicago sativa (Alfalfa).